The sequence spans 422 residues: GTPase Obg (422 aa).

One can recognise an Obg domain in the interval 2-157; sequence AKFIDEIKLT…YLAHIVLKVM (156 aa). The OBG-type G domain maps to 158-325; it reads SDVGIIGKPS…LKGKIWKILE (168 aa). GTP contacts are provided by residues 164–171, 189–193, 210–213, 279–282, and 306–308; these read GKPSAGKS, FTTLV, DLPG, NKSD, and SAI. Residues Ser-171 and Thr-191 each contribute to the Mg(2+) site. An OCT domain is found at 334–420; it reads EEEETEENVE…ILDYEFEWDG (87 aa).

Belongs to the TRAFAC class OBG-HflX-like GTPase superfamily. OBG GTPase family. In terms of assembly, monomer. It depends on Mg(2+) as a cofactor.

The protein resides in the cytoplasm. An essential GTPase which binds GTP, GDP and possibly (p)ppGpp with moderate affinity, with high nucleotide exchange rates and a fairly low GTP hydrolysis rate. Plays a role in control of the cell cycle, stress response, ribosome biogenesis and in those bacteria that undergo differentiation, in morphogenesis control. The polypeptide is GTPase Obg (Mycoplasmopsis agalactiae (strain NCTC 10123 / CIP 59.7 / PG2) (Mycoplasma agalactiae)).